A 151-amino-acid polypeptide reads, in one-letter code: UPF0178 protein Sde_3033 (151 aa).

This sequence belongs to the UPF0178 family.

The sequence is that of UPF0178 protein Sde_3033 from Saccharophagus degradans (strain 2-40 / ATCC 43961 / DSM 17024).